A 246-amino-acid polypeptide reads, in one-letter code: Probable transcriptional regulatory protein CLL_A1008 (246 aa).

It belongs to the TACO1 family.

The protein resides in the cytoplasm. The polypeptide is Probable transcriptional regulatory protein CLL_A1008 (Clostridium botulinum (strain Eklund 17B / Type B)).